Here is a 155-residue protein sequence, read N- to C-terminus: Probable cyclic pyranopterin monophosphate synthase (155 aa).

Substrate contacts are provided by residues 74 to 76 (MCH) and 110 to 111 (ME). Residue D125 is part of the active site.

Belongs to the MoaC family. As to quaternary structure, homohexamer; trimer of dimers.

The enzyme catalyses (8S)-3',8-cyclo-7,8-dihydroguanosine 5'-triphosphate = cyclic pyranopterin phosphate + diphosphate. It participates in cofactor biosynthesis; molybdopterin biosynthesis. Its function is as follows. Catalyzes the conversion of (8S)-3',8-cyclo-7,8-dihydroguanosine 5'-triphosphate to cyclic pyranopterin monophosphate (cPMP). This is Probable cyclic pyranopterin monophosphate synthase from Methanoregula boonei (strain DSM 21154 / JCM 14090 / 6A8).